We begin with the raw amino-acid sequence, 999 residues long: MWPPRFPPPRPGMSEETRQSKLAAAKKKLREYQQKNSPGVPAGAKKKKKIKNGHSPERPTASDCQSPENVPTDHIAPAPPTAATDTMFLGVTPSPDADLTQSHDAGNCSNLMEETKTFSSTESLRQLSQQLNGLVSESTSYINGEGLTSSNMKELENRYQELAVALDSSYVTNKQLSSTIEELKQQNQDTLDQLEKEKKDYQQKLAKEQGSLREQLQVHIQTIGILVSEKAELQTALAHTQQAARQKAGESEDLASRLQSSRQRVGELERTLSTVSTQQKQADRYNKDLTKERDALKLELYKNSKSNEDLRQQNSELEEKLRVLVAEKAAAQLGVEELQKKLEMSELLLQQFSSQSSAAGGNEQLQHAMEERAQLETHVSQLMESLKQLQVERDQYAENLKGESAMWQQRVQQMAEQVHTLKEEKEHRERQVQELETSLAALRSQMEEPPPPEPPAGPSEAEEQLQGEVEQLHKELERLTGQLRAQVQDNESLSHLNREQEGRLLELEREAQRWSEQAEERKQILESMQSDRTTISRALSQNRELKEQLAELQNGFVRLTNENMEITSALQSEQHVKKELARKLGELQERLGELKETVELKSQEAQGLQEQRDQCLSHLQQYAAAYQQHLAAYEQLTSEKEAIHKQLLLQTQLMDQLQHEEVQGKMAAELARQELQEAQERLKATSQENQQLQAQLSLLVLPGEGDVDQEEEDEEVPQSSLAIPEDLDSREAMVAFFNAAIARAEEEQARLRVQLKEQKARCRSLSHLAAPVQSKLEKEAVVPRNVDDSASEESNQALHVAMEKLQSRFLEVMQEKVELKERVEELEHCCIQLSGETDTIGEYIALYQNQRAVLKARHLEKEEYISRLAQDKEEMKVKLLELQELVLRLVNERNEWQGKFLAVSQNPGDVLTPVPTGSQEFGAADQQDDLREVSLADDIEPAQGEAGVPAPHENPTAQQIMQLLREIQNPRERPGLGSNPCIPFFYRADENDEVKIMVV.

Residues 1–11 (MWPPRFPPPRP) are compositionally biased toward pro residues. Disordered regions lie at residues 1 to 80 (MWPP…PAPP) and 244 to 288 (ARQK…YNKD). The interval 1-86 (MWPPRFPPPR…PAPPTAATDT (86 aa)) is interaction with p115/USO1. Dimethylated arginine occurs at positions 18 and 30. The Nuclear localization signal signature appears at 26-49 (KKKLREYQQKNSPGVPAGAKKKKK). Phosphoserine occurs at positions 37, 66, 273, and 438. A coiled-coil region spans residues 147-895 (LTSSNMKELE…VLRLVNERNE (749 aa)). Residues 271 to 280 (TLSTVSTQQK) show a composition bias toward polar residues. Positions 444–468 (SQMEEPPPPEPPAGPSEAEEQLQGE) are disordered. Residues 448 to 457 (EPPPPEPPAG) are compositionally biased toward pro residues. Serine 697, serine 934, and serine 978 each carry phosphoserine. An interaction with GORASP1/GRASP65 region spans residues 989 to 999 (DENDEVKIMVV).

The protein belongs to the GOLGA2 family. In terms of assembly, homodimer, may assemble into homohexamers. Homotetramer; forms a parallel homotetramer with a flexible rod-like structure that can give rise to I- and Y-shaped conformations. Interacts with GORASP1/GRASP65. The homooligomer forms a complex with GORASP1 with a 1:1 stoichiometry. Interacts with RAB1B that has been activated by GTP-binding. Interacts with p115/USO1; interaction with p115/USO1 inhibits interaction with STX5 and/or RAB1B. Interacts with STX5. Interacts with ZFPL1. Interacts with AKAP450/AKAP9; leading to recruit AKAP450/AKAP9 to the cis-Golgi. Post-translationally, phosphorylated at Ser-37 by CDK1 at the onset of mitosis, inhibiting the interaction with p115/USO1 and triggering Golgi disassembly. A report however suggests that Golgi disassembly is independent of phosphorylation at Ser-37. Phosphorylated at Ser-37 in prophase as the Golgi complex starts to break down, and remains phosphorylated during further breakdown and partitioning of the Golgi fragments in metaphase and anaphase. In telophase, GM130 is dephosphorylated by PP2A as the Golgi fragments start to reassemble. In terms of processing, cleaved by caspases at the onset of apoptosis. Methylation by PRMT5 is required for Golgi ribbon formation. In terms of tissue distribution, widely expressed. Detected in brain, kidney, lung, liver, spleen, heart, skeletal muscle, thymus and pancreas. Detected in spermatocytes. Present in oocytes during all oocyte meiotic maturation (at protein level).

It is found in the golgi apparatus. The protein resides in the cis-Golgi network membrane. It localises to the endoplasmic reticulum-Golgi intermediate compartment membrane. The protein localises to the cytoplasm. Its subcellular location is the cytoskeleton. It is found in the spindle pole. Functionally, peripheral membrane component of the cis-Golgi stack that acts as a membrane skeleton that maintains the structure of the Golgi apparatus, and as a vesicle thether that facilitates vesicle fusion to the Golgi membrane. Required for normal protein transport from the endoplasmic reticulum to the Golgi apparatus and the cell membrane. Together with p115/USO1 and STX5, involved in vesicle tethering and fusion at the cis-Golgi membrane to maintain the stacked and inter-connected structure of the Golgi apparatus. Plays a central role in mitotic Golgi disassembly: phosphorylation at Ser-37 by CDK1 at the onset of mitosis inhibits the interaction with p115/USO1, preventing tethering of COPI vesicles and thereby inhibiting transport through the Golgi apparatus during mitosis. Also plays a key role in spindle pole assembly and centrosome organization. Promotes the mitotic spindle pole assembly by activating the spindle assembly factor TPX2 to nucleate microtubules around the Golgi and capture them to couple mitotic membranes to the spindle: upon phosphorylation at the onset of mitosis, GOLGA2 interacts with importin-alpha via the nuclear localization signal region, leading to recruit importin-alpha to the Golgi membranes and liberate the spindle assembly factor TPX2 from importin-alpha. TPX2 then activates AURKA kinase and stimulates local microtubule nucleation. Upon filament assembly, nascent microtubules are further captured by GOLGA2, thus linking Golgi membranes to the spindle. Regulates the meiotic spindle pole assembly, probably via the same mechanism. Also regulates the centrosome organization. Also required for the Golgi ribbon formation and glycosylation of membrane and secretory proteins. This is Golgin subfamily A member 2 (Golga2) from Mus musculus (Mouse).